Reading from the N-terminus, the 123-residue chain is Nitrogen fixation nifHD1 region GlnB-like protein 2 (123 aa).

This sequence belongs to the P(II) protein family.

Could be involved in the regulation of nitrogen fixation. This is Nitrogen fixation nifHD1 region GlnB-like protein 2 (glnBB) from Methanosarcina barkeri.